The sequence spans 463 residues: Thiamine-repressible acid phosphatase pho4 (463 aa).

The N-terminal stretch at 1 to 18 (MKLSGISLWLLAASIVHA) is a signal peptide. The Nucleophile role is filled by histidine 69. N-linked (GlcNAc...) asparagine glycans are attached at residues asparagine 98, asparagine 104, asparagine 186, asparagine 221, asparagine 251, and asparagine 328. Residue aspartate 341 is the Proton donor of the active site. Residues asparagine 433, asparagine 439, and asparagine 458 are each glycosylated (N-linked (GlcNAc...) asparagine).

This sequence belongs to the histidine acid phosphatase family.

The protein resides in the secreted. Its subcellular location is the cell wall. It carries out the reaction a phosphate monoester + H2O = an alcohol + phosphate. Functionally, may dephosphorylate thiamine phosphates. The protein is Thiamine-repressible acid phosphatase pho4 (pho4) of Schizosaccharomyces pombe (strain 972 / ATCC 24843) (Fission yeast).